The primary structure comprises 404 residues: Multidrug resistance protein MdtG (404 aa).

11 helical membrane-spanning segments follow: residues 19–39 (LGCF…PLYV), 56–76 (LVFS…GGLA), 90–110 (LGMA…QFLI), 113–133 (ALLG…ATQV), 144–164 (TLST…GLLA), 171–191 (PVFF…FFFI), 222–242 (LFVT…ILTL), 254–274 (IAFI…LSAP), 288–308 (ILIV…FVQT), 317–337 (FLLG…LVYN), and 376–396 (AVFC…WNSL).

This sequence belongs to the major facilitator superfamily. DHA1 family. MdtG (TC 2.A.1.2.20) subfamily.

It localises to the cell inner membrane. The sequence is that of Multidrug resistance protein MdtG from Salmonella arizonae (strain ATCC BAA-731 / CDC346-86 / RSK2980).